Consider the following 207-residue polypeptide: dITP/XTP pyrophosphatase (207 aa).

A substrate-binding site is contributed by 10-15; the sequence is TRNAGK. Residues glutamate 43 and aspartate 72 each coordinate Mg(2+). The active-site Proton acceptor is the aspartate 72. Residues serine 73, 161–164, lysine 184, and 189–190 each bind substrate; these read FGYD and HR.

It belongs to the HAM1 NTPase family. Homodimer. Mg(2+) serves as cofactor.

The catalysed reaction is XTP + H2O = XMP + diphosphate + H(+). It catalyses the reaction dITP + H2O = dIMP + diphosphate + H(+). It carries out the reaction ITP + H2O = IMP + diphosphate + H(+). In terms of biological role, pyrophosphatase that catalyzes the hydrolysis of nucleoside triphosphates to their monophosphate derivatives, with a high preference for the non-canonical purine nucleotides XTP (xanthosine triphosphate), dITP (deoxyinosine triphosphate) and ITP. Seems to function as a house-cleaning enzyme that removes non-canonical purine nucleotides from the nucleotide pool, thus preventing their incorporation into DNA/RNA and avoiding chromosomal lesions. This is dITP/XTP pyrophosphatase from Nitratidesulfovibrio vulgaris (strain ATCC 29579 / DSM 644 / CCUG 34227 / NCIMB 8303 / VKM B-1760 / Hildenborough) (Desulfovibrio vulgaris).